The primary structure comprises 148 residues: uncharacterized protein (148 aa).

The region spanning 7-148 (LEINYKTDEL…HDVLLWKPIR (142 aa)) is the N-acetyltransferase domain.

This is an uncharacterized protein from Staphylococcus aureus (strain Mu50 / ATCC 700699).